A 654-amino-acid chain; its full sequence is Endoplasmic reticulum chaperone BiP (654 aa).

Positions 1–18 (MKFPMVAAALLLLCAVRA) are cleaved as a signal peptide. Positions 1 to 80 (MKFPMVAAAL…EGERLIGDAA (80 aa)) are required for interaction with ELAPOR1. 36–39 (GTTY) contacts ATP. Ser-86 carries the post-translational modification Phosphoserine. Position 96 (Lys-96) interacts with ATP. The residue at position 125 (Lys-125) is an N6-acetyllysine. The segment at 125–280 (KPYIQVDIGG…KKKTGKDVRK (156 aa)) is nucleotide-binding (NBD). 3'-nitrotyrosine is present on Tyr-160. Lys-213 bears the N6-acetyllysine mark. Residue 227–229 (GGT) participates in ATP binding. Lys-271 bears the N6-acetyllysine mark. An ATP-binding site is contributed by 293 to 300 (EKAKRALS). Residue Lys-326 is modified to N6-acetyllysine. A Glycyl lysine isopeptide (Lys-Gly) (interchain with G-Cter in SUMO2) cross-link involves residue Lys-352. Residue Lys-353 is modified to N6-acetyllysine; alternate. Lys-353 is covalently cross-linked (Glycyl lysine isopeptide (Lys-Gly) (interchain with G-Cter in SUMO1); alternate). 364-367 (GSTR) lines the ATP pocket. Positions 409-419 (QDTGDLVLLDV) are interdomain linker. The tract at residues 420-500 (CPLTLGIETV…PRGVPQIEVT (81 aa)) is substrate-binding (SBD). Lys-447 carries the post-translational modification N6-succinyllysine. An Omega-N-methylarginine modification is found at Arg-492. Thr-518 carries the post-translational modification O-AMP-threonine; alternate. The residue at position 518 (Thr-518) is a Phosphothreonine; alternate. Lys-585 bears the N6,N6,N6-trimethyllysine; by METTL21A; in vitro mark. Position 585 is an N6,N6-dimethyllysine; alternate (Lys-585). N6-methyllysine; alternate is present on Lys-585. An N6-methyllysine modification is found at Lys-591. A disordered region spans residues 632 to 654 (SKLYGSAGPPPTGEEDTSEKDEL). A phosphothreonine mark is found at Thr-643 and Thr-648. The span at 644–654 (GEEDTSEKDEL) shows a compositional bias: acidic residues. At Ser-649 the chain carries Phosphoserine. Residues 651–654 (KDEL) carry the Prevents secretion from ER motif.

This sequence belongs to the heat shock protein 70 family. As to quaternary structure, monomer and homooligomer; homooligomerization via the interdomain linker inactivates the chaperone activity and acts as a storage of HSPA5/BiP molecules. Interacts with DNAJC1 (via J domain). Component of an EIF2 complex at least composed of CELF1/CUGBP1, CALR, CALR3, EIF2S1, EIF2S2, HSP90B1 and HSPA5. Part of a large chaperone multiprotein complex comprising DNAJB11, HSP90B1, HSPA5, HYOU, PDIA2, PDIA4, PDIA6, PPIB, SDF2L1, UGGT1 and very small amounts of ERP29, but not, or at very low levels, CALR nor CANX. Interacts with TMEM132A and TRIM21. May form a complex with ERLEC1, OS9, SEL1L and SYVN1. Interacts with DNAJC10. Interacts with DNAJB9/ERdj4; leading to recruit HSPA5/BiP to ERN1/IRE1. Interacts with ERN1/IRE1 (via luminal domain); the interaction takes place following interaction with DNAJB9/ERdj4 and leads to inactivate ERN1/IRE1, the interaction also competitively inhibits ERN1 interaction with MANF. Interacts directly with MANF (via SAP domain); the interaction inhibits ATP binding to HSPA5/BiP and subsequent nucleotide exchange. Interacts with EIF2AK3/PERK (via luminal domain); interaction leads to inactivate EIF2AK3/PERK. Interacts with MX1. Interacts with METTL23. Interacts with CEMIP; the interaction induces calcium leakage from the endoplasmic reticulum and cell migration. Interacts with PCSK4 form; the interaction takes place in the endoplasmic reticulum. Interacts with CIPC. Interacts with CCDC88B (via C-terminus); the interaction opposes ERN1-mediated JNK activation, protecting against apoptosis. Interacts with INPP5K; necessary for INPP5K localization at the endoplasmic reticulum. Interacts with LOXL2; leading to activate the ERN1/IRE1-XBP1 pathway of the unfolded protein response. Interacts with CLU under stressed condition; interaction increases CLU protein stability; facilitates its retrotranslocation and redistribution to the mitochondria; cooperatively suppress stress-induced apoptosis by stabilizing mitochondrial membrane integrity. Interacts with CCDC47. Interacts with CLN3. Interacts with ELAPOR1; may regulate the function of HSPA5 in apoptosis and cell proliferation. Interacts with CASP7. Interacts with ILDR2; the interaction stabilizes ILDR2 expression. Interacts with ADAM7. Post-translationally, in unstressed cells, AMPylation at Thr-518 by FICD inactivates the chaperome activity: AMPylated form is locked in a relatively inert state and only weakly stimulated by J domain-containing proteins. In response to endoplasmic reticulum stress, de-AMPylation by the same protein, FICD, restores the chaperone activity.

The protein resides in the endoplasmic reticulum lumen. Its subcellular location is the melanosome. The protein localises to the cytoplasm. It localises to the cell surface. It carries out the reaction ATP + H2O = ADP + phosphate + H(+). Its activity is regulated as follows. The chaperone activity is regulated by ATP-induced allosteric coupling of the nucleotide-binding (NBD) and substrate-binding (SBD) domains. In the ADP-bound and nucleotide-free (apo) states, the two domains have little interaction. In contrast, in the ATP-bound state the two domains are tightly coupled, which results in drastically accelerated kinetics in both binding and release of polypeptide substrates. J domain-containing co-chaperones (DNAJB9/ERdj4 or DNAJC10/ERdj5) stimulate the ATPase activity and are required for efficient substrate recognition by HSPA5/BiP. Homooligomerization inactivates participating HSPA5/BiP protomers and probably act as reservoirs to store HSPA5/BiP molecules when they are not needed by the cell. Functionally, endoplasmic reticulum chaperone that plays a key role in protein folding and quality control in the endoplasmic reticulum lumen. Involved in the correct folding of proteins and degradation of misfolded proteins via its interaction with DNAJC10/ERdj5, probably to facilitate the release of DNAJC10/ERdj5 from its substrate. Acts as a key repressor of the EIF2AK3/PERK and ERN1/IRE1-mediated unfolded protein response (UPR). In the unstressed endoplasmic reticulum, recruited by DNAJB9/ERdj4 to the luminal region of ERN1/IRE1, leading to disrupt the dimerization of ERN1/IRE1, thereby inactivating ERN1/IRE1. Also binds and inactivates EIF2AK3/PERK in unstressed cells. Accumulation of misfolded protein in the endoplasmic reticulum causes release of HSPA5/BiP from ERN1/IRE1 and EIF2AK3/PERK, allowing their homodimerization and subsequent activation. Plays an auxiliary role in post-translational transport of small presecretory proteins across endoplasmic reticulum (ER). May function as an allosteric modulator for SEC61 channel-forming translocon complex, likely cooperating with SEC62 to enable the productive insertion of these precursors into SEC61 channel. Appears to specifically regulate translocation of precursors having inhibitory residues in their mature region that weaken channel gating. May also play a role in apoptosis and cell proliferation. This chain is Endoplasmic reticulum chaperone BiP, found in Cricetulus griseus (Chinese hamster).